The chain runs to 500 residues: Ribose import ATP-binding protein RbsA (500 aa).

ABC transporter domains lie at 3–239 (IEMK…VGRE) and 246–493 (DRTP…TGGV). 35 to 42 (GENGAGKS) provides a ligand contact to ATP.

The protein belongs to the ABC transporter superfamily. Ribose importer (TC 3.A.1.2.1) family. As to quaternary structure, the complex is composed of an ATP-binding protein (RbsA), two transmembrane proteins (RbsC) and a solute-binding protein (RbsB).

The protein localises to the cell membrane. It carries out the reaction D-ribose(out) + ATP + H2O = D-ribose(in) + ADP + phosphate + H(+). Functionally, part of the ABC transporter complex RbsABC involved in ribose import. Responsible for energy coupling to the transport system. The protein is Ribose import ATP-binding protein RbsA of Lacticaseibacillus paracasei (strain ATCC 334 / BCRC 17002 / CCUG 31169 / CIP 107868 / KCTC 3260 / NRRL B-441) (Lactobacillus paracasei).